We begin with the raw amino-acid sequence, 562 residues long: Aureusidin synthase (562 aa).

2 cysteine pairs are disulfide-bonded: C71–C86 and C85–C148. 6 residues coordinate Cu cation: H147, H168, H177, H301, H305, and H335. The segment at residues 151 to 168 (CAGAYNQAGFTNLKLQIH) is a cross-link (2'-(S-cysteinyl)-histidine (Cys-His)).

Belongs to the tyrosinase family. As to quaternary structure, monomer. The cofactor is Cu(2+). Post-translationally, glycosylated. Contains probably N- and C-terminal propeptides. As to expression, expressed in petals. Not detected in stems and leaves.

The protein resides in the vacuole lumen. It catalyses the reaction 2',4,4',6'-tetrahydroxychalcone 4'-O-beta-D-glucoside + O2 = aureusidin 6-O-beta-glucoside + H2O. It carries out the reaction 2 2',3,4,4',6'-pentahydroxychalcone 4'-O-beta-D-glucoside + O2 + 2 H(+) = 2 aureusidin 6-O-beta-glucoside + 2 H2O. The catalysed reaction is 2',3,4,4',6'-pentahydroxychalcone 4'-O-beta-D-glucoside + O2 + H(+) = bracteatin 6-O-beta-glucoside + H2O. H(2)O(2) activates the 3-hydroxylation and oxidative cyclization of tetrahydroxychalcone but inhibits reaction with pentahydroxychalcone. Inhibited by phenylthiourea. Involved in the biosynthesis of aurones, plant flavonoids that provide yellow coloration to flowers. Can use tetrahydroxychalcone (THC), pentahydroxychalcone (PHC), THC 4'-glucoside and PHC 4'-glucoside as substrates, but not 2'-hydroxychalcone, 4-hydroxychalcone, PHC 3-glucoside, 2',6'-dihydroxy-4,4'-dimethoxychalcone, naringenin, eriodictyol and 4,4',6-trihydroxyaurone. Can also produce bracteatin from PHC. This chain is Aureusidin synthase (AS1), found in Antirrhinum majus (Garden snapdragon).